The following is a 304-amino-acid chain: Tyrosine recombinase XerC (304 aa).

In terms of domain architecture, Core-binding (CB) spans 6–92 (NKLYLQAQAY…VLRQWFAYLV (87 aa)). The 180-residue stretch at 113–292 (HLPKNIDAER…DFQHLAKIYD (180 aa)) folds into the Tyr recombinase domain. Active-site residues include R152, K176, H244, R247, and H270. Y279 serves as the catalytic O-(3'-phospho-DNA)-tyrosine intermediate.

The protein belongs to the 'phage' integrase family. XerC subfamily. As to quaternary structure, forms a cyclic heterotetrameric complex composed of two molecules of XerC and two molecules of XerD.

Its subcellular location is the cytoplasm. Site-specific tyrosine recombinase, which acts by catalyzing the cutting and rejoining of the recombining DNA molecules. The XerC-XerD complex is essential to convert dimers of the bacterial chromosome into monomers to permit their segregation at cell division. It also contributes to the segregational stability of plasmids. The sequence is that of Tyrosine recombinase XerC from Haemophilus ducreyi (strain 35000HP / ATCC 700724).